Consider the following 209-residue polypeptide: Imidazoleglycerol-phosphate dehydratase (209 aa).

Residues 1–23 (MQLSDRPLTAPGTAPRQATVSRR) form a disordered region.

Belongs to the imidazoleglycerol-phosphate dehydratase family.

Its subcellular location is the cytoplasm. It catalyses the reaction D-erythro-1-(imidazol-4-yl)glycerol 3-phosphate = 3-(imidazol-4-yl)-2-oxopropyl phosphate + H2O. The protein operates within amino-acid biosynthesis; L-histidine biosynthesis; L-histidine from 5-phospho-alpha-D-ribose 1-diphosphate: step 6/9. This Synechococcus elongatus (strain ATCC 33912 / PCC 7942 / FACHB-805) (Anacystis nidulans R2) protein is Imidazoleglycerol-phosphate dehydratase.